The following is a 257-amino-acid chain: Transcription factor MYB3 (257 aa).

HTH myb-type domains lie at 9–61 (KAHM…MNYL) and 62–116 (RPDL…KRKL). 2 DNA-binding regions (H-T-H motif) span residues 37 to 61 (WRSL…MNYL) and 89 to 112 (WSLI…NTHI). The short motif at 189–193 (LNLEL) is the Required for interaction with CPL1 element.

As to quaternary structure, interacts with CPL1. Expressed in roots, stems, leaves, flowers and siliques.

The protein localises to the nucleus. This chain is Transcription factor MYB3 (MYB3), found in Arabidopsis thaliana (Mouse-ear cress).